The primary structure comprises 185 residues: MLTLASKLKREEGVRAGRTPAGSNDAAHRVSIRDRLLIKEVAELEANLPSTCKVTFPDENKLCHFQLAISPDEGYYLGGKFQFEIEVPEAYNMVPPKVKCLTRIWHPNIAETGEICLSLLREHSIDGTGWAPTRTLKDVVWGLNSLFTDLLNFDDPLNIDAAEHHLRDKEDFRNKVQDFIKNYAR.

The segment at 1–29 (MLTLASKLKREEGVRAGRTPAGSNDAAHR) is interaction with uba3. In terms of domain architecture, UBC core spans 32–185 (IRDRLLIKEV…VQDFIKNYAR (154 aa)). The Glycyl thioester intermediate role is filled by Cys-116.

Belongs to the ubiquitin-conjugating enzyme family. UBE2F subfamily.

It catalyses the reaction [E1 NEDD8-activating enzyme]-S-[NEDD8 protein]-yl-L-cysteine + [E2 NEDD8-conjugating enzyme]-L-cysteine = [E1 NEDD8-activating enzyme]-L-cysteine + [E2 NEDD8-conjugating enzyme]-S-[NEDD8-protein]-yl-L-cysteine.. It participates in protein modification; protein neddylation. Functionally, accepts the ubiquitin-like protein NEDD8 from the UBA3-NAE1 E1 complex and catalyzes its covalent attachment to other proteins. Together with the E3 ubiquitin ligase rnf7/rbx2, specifically neddylates cullin-5 (cul5). Does not neddylate cul1, cul2, cul3, cul4a or cul4b. The chain is NEDD8-conjugating enzyme UBE2F (ube2f) from Danio rerio (Zebrafish).